A 469-amino-acid polypeptide reads, in one-letter code: UDP-N-acetylmuramate--L-alanine ligase (469 aa).

An ATP-binding site is contributed by 122 to 128 (GTHGKTT).

The protein belongs to the MurCDEF family.

The protein localises to the cytoplasm. The catalysed reaction is UDP-N-acetyl-alpha-D-muramate + L-alanine + ATP = UDP-N-acetyl-alpha-D-muramoyl-L-alanine + ADP + phosphate + H(+). It functions in the pathway cell wall biogenesis; peptidoglycan biosynthesis. Cell wall formation. The polypeptide is UDP-N-acetylmuramate--L-alanine ligase (Legionella pneumophila (strain Lens)).